An 85-amino-acid polypeptide reads, in one-letter code: Putative membrane protein insertion efficiency factor (85 aa).

The protein belongs to the UPF0161 family.

It is found in the cell membrane. Could be involved in insertion of integral membrane proteins into the membrane. The chain is Putative membrane protein insertion efficiency factor from Baumannia cicadellinicola subsp. Homalodisca coagulata.